A 211-amino-acid chain; its full sequence is Nucleoside triphosphate pyrophosphatase (211 aa).

The Proton acceptor role is filled by Asp-78.

The protein belongs to the Maf family. A divalent metal cation is required as a cofactor.

Its subcellular location is the cytoplasm. It catalyses the reaction a ribonucleoside 5'-triphosphate + H2O = a ribonucleoside 5'-phosphate + diphosphate + H(+). The catalysed reaction is a 2'-deoxyribonucleoside 5'-triphosphate + H2O = a 2'-deoxyribonucleoside 5'-phosphate + diphosphate + H(+). Nucleoside triphosphate pyrophosphatase. May have a dual role in cell division arrest and in preventing the incorporation of modified nucleotides into cellular nucleic acids. The chain is Nucleoside triphosphate pyrophosphatase from Mycolicibacterium smegmatis (strain ATCC 700084 / mc(2)155) (Mycobacterium smegmatis).